The sequence spans 388 residues: Mannitol-1-phosphate 5-dehydrogenase (388 aa).

Residue A4–G15 participates in NAD(+) binding.

This sequence belongs to the mannitol dehydrogenase family.

The enzyme catalyses D-mannitol 1-phosphate + NAD(+) = beta-D-fructose 6-phosphate + NADH + H(+). This Lactococcus lactis subsp. cremoris (strain SK11) protein is Mannitol-1-phosphate 5-dehydrogenase.